Here is a 1180-residue protein sequence, read N- to C-terminus: MNKISDTIIITSTSNEDEVDNNNNNNNLKEIDRSPRVNNNNNNILTNVNNNKNNTITSSGGSDSSSSSSNNNNNKIKKSKKHKEKEHMDSIVKLYSGKFDSWMVICHLFKYRDNPGIVDFLCNKMYNLEDKDIDFYITQLCILLINQPHDQKASFSSLARFILDRCASSFRFAIKAYWIFQAFEEDGEKNLFSIEGSVYLHSPSTSPKDVPMYSNDQIVPIDLDKIYNQSQYDDDDFDLSDDDGGFEIIKKNDHHYENDHHIENDPKKDINSNNNNNNNINNNNSNNDDNNNNEILPNENSDNSINDENNQYGNSNNNNNISGENDNIKIDINSQNKSDSNIETLNSTLCEETKTSPIKDDMENNNNNNNNNNNNNNNNNNNNNINNNNINNNNINNNNNINYGHINGSLSTLDGIGQPYISQPNDPIENITQILKRNRIIYKKVEEKKELATRLREFCEMSVITCSRPLITRPRTSSLPSPLISYNSGKIGGNYHKILSPSSVDSTSLISEDDKIIEKEEEDNVVEDDDDDEVNSEDFIPTATTTATTTTTTIPNHLSKTTSGVGINSNSSTPININSAGAGAGGGGEINHIGYDDISYLDKCKTPPAESKLSDHDFEFELSKSHRCDYLNDILSFIQKLAHISKILLPIPIDLRQAKLKHEISLLNINLPLGLYVPLWQSSNHHCVVRIPPEEVKILNSRERVPFLLVLEVIESEHEALSSNIFEVVSSYLQYTTGNSALKKDDIKRKYYSEKFKKSFLNSSINSTISNSSDSCTTETTTTSPVATSPTLPINIPHSKLINDGSNSISKSLPVTPTQSTVLNNLISTSTAISPPSQQQQLPSPSNTTTTTTTTTTNTNNTTTTTTTTTTTLSTSPTNEKILNENKQNSSPFGESWQEKIERYKKISPFGDYPNWRLYSVIVKTGDDCRQEQMAVQLISKFDEIWKETRLPLYLRPYSILVTSSGGGIIETIPDTMSLHNLKKSTPGFTTLLNYFKSTYGDPSGLRFRTAQSNFIESMAAYSIVTYILQIKDRHNGNILIDKEGHIVHIDFGFILSNSPGNISFESAPFKLTQELVDVMGGIQSGQFQYFKVLCVRGLIEARKQVDKIISLIEIMMSGPKMSCFVGGKEVIEQLKARFFLDVNERECSTLVENLISYSIDHFKTRYYDKYQSWLNGIYQ.

One can recognise a PIK helical domain in the interval 1-206 (MNKISDTIII…SVYLHSPSTS (206 aa)). Disordered stretches follow at residues 15-84 (NEDE…KHKE), 257-327 (ENDH…ENDN), 355-391 (TSPI…NNIN), 768-799 (TISN…IPHS), and 832-894 (AISP…SPFG). Positions 38 to 74 (NNNNNNILTNVNNNKNNTITSSGGSDSSSSSSNNNNN) are enriched in low complexity. The segment covering 75–84 (KIKKSKKHKE) has biased composition (basic residues). Over residues 257–270 (ENDHHIENDPKKDI) the composition is skewed to basic and acidic residues. 4 stretches are compositionally biased toward low complexity: residues 271–325 (NSNN…SGEN), 364–391 (NNNN…NNIN), 768–793 (TISN…PTLP), and 835–879 (PPSQ…SPTN). A PI3K/PI4K catalytic domain is found at 895–1164 (ESWQEKIERY…LISYSIDHFK (270 aa)). A G-loop region spans residues 901 to 907 (IERYKKI). The tract at residues 1030–1038 (QIKDRHNGN) is catalytic loop. An activation loop region spans residues 1049–1073 (HIDFGFILSNSPGNISFESAPFKLT).

The protein belongs to the PI3/PI4-kinase family. Type III PI4K subfamily.

It catalyses the reaction a 1,2-diacyl-sn-glycero-3-phospho-(1D-myo-inositol) + ATP = a 1,2-diacyl-sn-glycero-3-phospho-(1D-myo-inositol 4-phosphate) + ADP + H(+). Its function is as follows. Acts on phosphatidylinositol (PtdIns) in the first committed step in the production of the second messenger inositol-1,4,5,-trisphosphate. The polypeptide is Phosphatidylinositol 4-kinase (pikD) (Dictyostelium discoideum (Social amoeba)).